The chain runs to 448 residues: Beclin-1 (448 aa).

Position 1 is an N-acetylmethionine (M1). A phosphoserine mark is found at S14 and S29. A phosphoserine; by AMPK mark is found at S88, S91, and S94. The BH3 motif lies at 106–125; sequence TMENLSRRLKVTGDLFDIMS. Residues 110-157 are interaction with BCL2 and BCL2L1; the sequence is LSRRLKVTGDLFDIMSGQTDVDHPLCEECTDTLLDQLDTQLNVTENEC. T117 carries the post-translational modification Phosphothreonine; by DAPK1. A coiled-coil region spans residues 140–267; the sequence is DTLLDQLDTQ…QLDKLKKTNV (128 aa). Residues 243–448 form an evolutionary conserved domain (ECD) region; the sequence is DELKSVENQM…AWVSSQFYNK (206 aa). Residues K400 and K435 each participate in a glycyl lysine isopeptide (Lys-Gly) (interchain with G-Cter in ubiquitin) cross-link. A required for membrane-association region spans residues 423–448; that stretch reads WTKALKFMLTNLKWGLAWVSSQFYNK.

It belongs to the beclin family. As to quaternary structure, a homodimeric form is proposed to exist; this metastable form readily transits to ATG14- or UVRAG-containing complexes with BECN1:UVRAG being more stable than BECN1:ATG14. Component of the PI3K (PI3KC3/PI3K-III/class III phosphatidylinositol 3-kinase) complex the core of which is composed of the catalytic subunit PIK3C3, the regulatory subunit PIK3R4 and BECN1 associating with additional regulatory/auxiliary subunits to form alternative complex forms. Alternative complex forms containing a fourth regulatory subunit in a mutually exclusive manner are PI3K complex I (PI3KC3-C1) containing ATG14, and PI3K complex II (PI3KC3-C2) containing UVRAG. PI3KC3-C1 displays a V-shaped architecture with PIK3R4 serving as a bridge between PIK3C3 and the ATG14:BECN1 subcomplex. Both, PI3KC3-C1 and PI3KC3-C2, can associate with further regulatory subunits, such as RUBCN, SH3GLB1/Bif-1 and AMBRA1. PI3KC3-C1 probably associates with PIK3CB. Forms a complex with PPP2CA and AMBRA1; AMBRA1 and BECN1 components of the complex regulate MYC stability via different pathways. Component of the complex, at least composed of LRPPRC, BECN1 and BCL2; the interactions prevent BECN1 from forming an autophagy-inducing complex with PIK3C3. Interacts with AMBRA1, GOPC, GRID2. Interacts with BCL2 and BCL2L1 isoform Bcl-X(L); the interaction inhibits BECN1 function in promoting autophagy by interfering with the formation of the PI3K complex. Interacts with cytosolic HMGB1; inhibits the interaction of BECN1 and BCL2 leading to promotion of autophagy. Interacts with USP10, USP13, VMP1, DAPK1, RAB39A. Interacts with the poly-Gln domain of ATXN3; the interaction causes deubiquitination at Lys-400 and stabilizes BECN1. Interacts with SLAMF1. Interacts with TRIM5; the interaction causes activation of BECN1 by causing its dissociation from its inhibitors BCL2 and TAB2. Interacts with active ULK1 (phosphorylated on 'Ser-317') and MEFV simultaneously. Interacts with WDR81 and WDR91; negatively regulates the PI3 kinase/PI3K activity associated with endosomal membranes. Interacts with LAPTM4B; competes with EGFR for LAPTM4B binding; regulates EGFR activity. Interacts with TRIM50. Interacts with TRIM16. Interacts with ATG14; this interaction is increased in the absence of TMEM39A. Interacts with WASHC1; preventing interaction with AMBRA1 and the DCX(AMBRA1) complex and subsequent ubiquitination. Interacts with TRIM17. Interacts with BCL2L10/BCL-B (via BH1 domain). Interacts with SH3BGRL. Interacts with IRGM; enhancing BECN1-interacting partners and influencing the composition of the BECN1 complex. Interacts with ARMC3. Interacts with LRPPRC. In terms of assembly, (Microbial infection) Interacts with African swine fever virus (ASFV) apoptosis regulator Bcl-2 homolog; this interaction allows the virus to inhibit BECN1, and thus autophagy. Phosphorylation at Thr-117 by DAPK1 reduces its interaction with BCL2 and BCL2L1 and promotes induction of autophagy. In response to autophagic stimuli, phosphorylated at serine residues by AMPK in an ATG14-dependent manner, and this phosphorylation is critical for maximally efficient autophagy. In terms of processing, polyubiquitinated by NEDD4, both with 'Lys-11'- and 'Lys-63'-linkages. 'Lys-11'-linked polyubiquitination leads to degradation and is enhanced when the stabilizing interaction partner VPS34 is depleted. Deubiquitinated by USP10 and USP13, leading to stabilize the PIK3C3/VPS34-containing complexes. Polyubiquitinated at Lys-400 with 'Lys-48'-linkages. 'Lys-48'-linked polyubiquitination of Lys-400 leads to degradation. Deubiquitinated by ATXN3, leading to stabilization. Ubiquitinated at Lys-435 via 'Lys-63'-linkage by the DCX(AMBRA1) complex, thereby increasing the association between BECN1 and PIK3C3 to promote PIK3C3 activity. 'Lys-48'-linked ubiquitination by RNF216 leads to proteasomal degradation and autophagy inhibition. Post-translationally, proteolytically processed by caspases including CASP8 and CASP3; the C-terminal fragments lack autophagy-inducing capacity and are proposed to induce apoptosis. Thus the cleavage is proposed to be an determinant to switch from autophagy to apoptosis pathways affecting cellular homeostasis including viral infections and survival of tumor cells.

It is found in the cytoplasm. The protein localises to the golgi apparatus. It localises to the trans-Golgi network membrane. The protein resides in the endosome membrane. Its subcellular location is the endoplasmic reticulum membrane. It is found in the mitochondrion membrane. The protein localises to the cytoplasmic vesicle. It localises to the autophagosome. The protein resides in the mitochondrion. Its subcellular location is the nucleus. Functionally, plays a central role in autophagy. Acts as a core subunit of the PI3K complex that mediates formation of phosphatidylinositol 3-phosphate; different complex forms are believed to play a role in multiple membrane trafficking pathways: PI3KC3-C1 is involved in initiation of autophagosomes and PI3KC3-C2 in maturation of autophagosomes and endocytosis. Involved in regulation of degradative endocytic trafficking and required for the abscission step in cytokinesis, probably in the context of PI3KC3-C2. Essential for the formation of PI3KC3-C2 but not PI3KC3-C1 PI3K complex forms. Involved in endocytosis. May play a role in antiviral host defense. In terms of biological role, beclin-1-C 35 kDa localized to mitochondria can promote apoptosis; it induces the mitochondrial translocation of BAX and the release of proapoptotic factors. The chain is Beclin-1 (BECN1) from Sus scrofa (Pig).